The chain runs to 230 residues: MSEIKDVIVQGLWKNNSALVQLLGMCPLLAVTSTATNALGLGLATTLVLTLTNLTISALRRWTPAEIRIPIYVMIIASVVSAVQMLINAYAFGLYQSLGIFIPLIVTNCIVVGRAEAFAAKKGPALSALDGFSIGMGATGAMFVLGSMREIIGNGTLFDGADGLLGDWAKVLRVEIFHTDSPFLLAMLPPGAFIGLGLMLAVKYLIDEKMKKRRAEAVAAELPSGETGNV.

6 helical membrane passes run 18 to 38 (ALVQ…ATNA), 39 to 59 (LGLG…ISAL), 63 to 83 (TPAE…VSAV), 86 to 106 (LINA…PLIV), 125 to 145 (ALSA…MFVL), and 182 to 202 (PFLL…MLAV).

It belongs to the NqrDE/RnfAE family. As to quaternary structure, the complex is composed of six subunits: RnfA, RnfB, RnfC, RnfD, RnfE and RnfG.

The protein resides in the cell inner membrane. Part of a membrane-bound complex that couples electron transfer with translocation of ions across the membrane. The chain is Ion-translocating oxidoreductase complex subunit E from Citrobacter koseri (strain ATCC BAA-895 / CDC 4225-83 / SGSC4696).